A 206-amino-acid chain; its full sequence is Probable N-acetyltransferase 14 (206 aa).

Residues 55-206 (LRFVLASFAL…TLVREFSKDL (152 aa)) enclose the N-acetyltransferase domain. The helical transmembrane segment at 57–77 (FVLASFALALLLPVFLAVTAV) threads the bilayer.

It belongs to the camello family.

It localises to the membrane. Functionally, probable acetyltransferase. May act as a transcription factor regulating the expression of coproporphyrinogen oxidase by binding to a promoter regulatory element. The sequence is that of Probable N-acetyltransferase 14 (NAT14) from Macaca fascicularis (Crab-eating macaque).